The primary structure comprises 585 residues: Arginine--tRNA ligase (585 aa).

The 'HIGH' region signature appears at 126 to 136 (PNIAKEMHVGH).

This sequence belongs to the class-I aminoacyl-tRNA synthetase family. As to quaternary structure, monomer.

Its subcellular location is the cytoplasm. It carries out the reaction tRNA(Arg) + L-arginine + ATP = L-arginyl-tRNA(Arg) + AMP + diphosphate. The chain is Arginine--tRNA ligase from Trichodesmium erythraeum (strain IMS101).